Reading from the N-terminus, the 90-residue chain is Co-chaperonin GroES (90 aa).

Belongs to the GroES chaperonin family. Heptamer of 7 subunits arranged in a ring. Interacts with the chaperonin GroEL.

The protein localises to the cytoplasm. Its function is as follows. Together with the chaperonin GroEL, plays an essential role in assisting protein folding. The GroEL-GroES system forms a nano-cage that allows encapsulation of the non-native substrate proteins and provides a physical environment optimized to promote and accelerate protein folding. GroES binds to the apical surface of the GroEL ring, thereby capping the opening of the GroEL channel. The polypeptide is Co-chaperonin GroES (Bacteroides fragilis (strain ATCC 25285 / DSM 2151 / CCUG 4856 / JCM 11019 / LMG 10263 / NCTC 9343 / Onslow / VPI 2553 / EN-2)).